Here is a 137-residue protein sequence, read N- to C-terminus: ATP synthase epsilon chain (137 aa).

This sequence belongs to the ATPase epsilon chain family. F-type ATPases have 2 components, CF(1) - the catalytic core - and CF(0) - the membrane proton channel. CF(1) has five subunits: alpha(3), beta(3), gamma(1), delta(1), epsilon(1). CF(0) has three main subunits: a, b and c.

It localises to the cellular thylakoid membrane. In terms of biological role, produces ATP from ADP in the presence of a proton gradient across the membrane. This is ATP synthase epsilon chain from Nostoc punctiforme (strain ATCC 29133 / PCC 73102).